A 367-amino-acid polypeptide reads, in one-letter code: Serine/threonine-protein kinase-transforming protein Rmil (367 aa).

The tract at residues 1 to 64 (EGGSTAGLSA…DSSDDWEIPD (64 aa)) is disordered. The span at 33–57 (QRERKSSSSSEDRNRMKTLGRRDSS) shows a compositional bias: basic and acidic residues. A Protein kinase domain is found at 67 to 327 (ITVGQRIGSG…PQILASIELL (261 aa)). Residues 73–81 (IGSGSFGTV) and Lys-93 contribute to the ATP site. Catalysis depends on Asp-186, which acts as the Proton acceptor.

This sequence belongs to the protein kinase superfamily. TKL Ser/Thr protein kinase family. RAF subfamily.

The catalysed reaction is L-seryl-[protein] + ATP = O-phospho-L-seryl-[protein] + ADP + H(+). The enzyme catalyses L-threonyl-[protein] + ATP = O-phospho-L-threonyl-[protein] + ADP + H(+). The sequence is that of Serine/threonine-protein kinase-transforming protein Rmil (V-RMIL) from Avian retrovirus IC10.